The following is a 519-amino-acid chain: Ribose import ATP-binding protein RbsA 2 (519 aa).

ABC transporter domains are found at residues 15–252 and 262–506; these read FRLR…VGRP and HEPG…TGVR. 47–54 is a binding site for ATP; the sequence is GENGAGKS.

This sequence belongs to the ABC transporter superfamily. Ribose importer (TC 3.A.1.2.1) family. As to quaternary structure, the complex is composed of an ATP-binding protein (RbsA), two transmembrane proteins (RbsC) and a solute-binding protein (RbsB).

Its subcellular location is the cell membrane. It carries out the reaction D-ribose(out) + ATP + H2O = D-ribose(in) + ADP + phosphate + H(+). Its function is as follows. Part of the ABC transporter complex RbsABC involved in ribose import. Responsible for energy coupling to the transport system. The chain is Ribose import ATP-binding protein RbsA 2 from Rubrobacter xylanophilus (strain DSM 9941 / JCM 11954 / NBRC 16129 / PRD-1).